A 233-amino-acid polypeptide reads, in one-letter code: U2 small nuclear ribonucleoprotein A' (233 aa).

LRR repeat units follow at residues 20–40 (KLTLLLRDLQITELENLAITQ), 42–63 (KYQVIDLSNNDLISLGNIPKRF), 65–86 (NLQCLLLSNNNISYIDDESFPS), and 89–110 (HITSITLFNNNIYQFQKSFKDK). The 39-residue stretch at 122-160 (NPITEMENYRYFIIWLIPSLKVLDFKKVKQAERKTSEDM) folds into the LRRCT domain.

Belongs to the U2 small nuclear ribonucleoprotein A family. As to quaternary structure, associated with the spliceosome.

The protein localises to the nucleus. Functionally, involved in pre-mRNA splicing. This Candida albicans (strain SC5314 / ATCC MYA-2876) (Yeast) protein is U2 small nuclear ribonucleoprotein A' (LEA1).